The following is a 330-amino-acid chain: tRNA U34 carboxymethyltransferase (330 aa).

Residues K91, W105, K110, G130, 152-154 (DPS), 181-182 (IE), M196, Y200, and R315 contribute to the carboxy-S-adenosyl-L-methionine site.

Belongs to the class I-like SAM-binding methyltransferase superfamily. CmoB family. Homotetramer.

It carries out the reaction carboxy-S-adenosyl-L-methionine + 5-hydroxyuridine(34) in tRNA = 5-carboxymethoxyuridine(34) in tRNA + S-adenosyl-L-homocysteine + H(+). Catalyzes carboxymethyl transfer from carboxy-S-adenosyl-L-methionine (Cx-SAM) to 5-hydroxyuridine (ho5U) to form 5-carboxymethoxyuridine (cmo5U) at position 34 in tRNAs. The protein is tRNA U34 carboxymethyltransferase of Shewanella pealeana (strain ATCC 700345 / ANG-SQ1).